Reading from the N-terminus, the 174-residue chain is Interferon gamma (174 aa).

An N-terminal signal peptide occupies residues 1-23 (MHTTRCILALLLCLTQAMSGCYC). Gln-24 bears the Pyrrolidone carboxylic acid mark. Asn-39 and Asn-106 each carry an N-linked (GlcNAc...) asparagine glycan.

It belongs to the type II (or gamma) interferon family. Homodimer. Interacts with IFNGR1 (via extracellular domain); this interaction promotes IFNGR1 dimerization. In terms of tissue distribution, released primarily from activated T lymphocytes.

The protein localises to the secreted. Functionally, type II interferon produced by immune cells such as T-cells and NK cells that plays crucial roles in antimicrobial, antiviral, and antitumor responses by activating effector immune cells and enhancing antigen presentation. Primarily signals through the JAK-STAT pathway after interaction with its receptor IFNGR1 to affect gene regulation. Upon IFNG binding, IFNGR1 intracellular domain opens out to allow association of downstream signaling components JAK2, JAK1 and STAT1, leading to STAT1 activation, nuclear translocation and transcription of IFNG-regulated genes. Many of the induced genes are transcription factors such as IRF1 that are able to further drive regulation of a next wave of transcription. Plays a role in class I antigen presentation pathway by inducing a replacement of catalytic proteasome subunits with immunoproteasome subunits. In turn, increases the quantity, quality, and repertoire of peptides for class I MHC loading. Increases the efficiency of peptide generation also by inducing the expression of activator PA28 that associates with the proteasome and alters its proteolytic cleavage preference. Up-regulates as well MHC II complexes on the cell surface by promoting expression of several key molecules such as cathepsins B/CTSB, H/CTSH, and L/CTSL. Participates in the regulation of hematopoietic stem cells during development and under homeostatic conditions by affecting their development, quiescence, and differentiation. The sequence is that of Interferon gamma (IFNG) from Mesocricetus auratus (Golden hamster).